The primary structure comprises 207 residues: ATP-dependent Clp protease proteolytic subunit 1 (207 aa).

Catalysis depends on serine 103, which acts as the Nucleophile. Histidine 128 is a catalytic residue.

It belongs to the peptidase S14 family. In terms of assembly, fourteen ClpP subunits assemble into 2 heptameric rings which stack back to back to give a disk-like structure with a central cavity, resembling the structure of eukaryotic proteasomes.

Its subcellular location is the cytoplasm. It catalyses the reaction Hydrolysis of proteins to small peptides in the presence of ATP and magnesium. alpha-casein is the usual test substrate. In the absence of ATP, only oligopeptides shorter than five residues are hydrolyzed (such as succinyl-Leu-Tyr-|-NHMec, and Leu-Tyr-Leu-|-Tyr-Trp, in which cleavage of the -Tyr-|-Leu- and -Tyr-|-Trp bonds also occurs).. In terms of biological role, cleaves peptides in various proteins in a process that requires ATP hydrolysis. Has a chymotrypsin-like activity. Plays a major role in the degradation of misfolded proteins. This Synechococcus sp. (strain CC9605) protein is ATP-dependent Clp protease proteolytic subunit 1.